Consider the following 461-residue polypeptide: tRNA modification GTPase MnmE (461 aa).

(6S)-5-formyl-5,6,7,8-tetrahydrofolate-binding residues include Arg22, Glu87, and Arg126. One can recognise a TrmE-type G domain in the interval 222 to 382 (GLKTVIVGKP…LEETIFNMVV (161 aa)). Asn232 contacts K(+). Residues 232–237 (NVGKSS), 251–257 (TDIPGTT), and 276–279 (DTAG) each bind GTP. Position 236 (Ser236) interacts with Mg(2+). The K(+) site is built by Thr251, Ile253, and Thr256. Thr257 provides a ligand contact to Mg(2+). Lys461 is a binding site for (6S)-5-formyl-5,6,7,8-tetrahydrofolate.

It belongs to the TRAFAC class TrmE-Era-EngA-EngB-Septin-like GTPase superfamily. TrmE GTPase family. Homodimer. Heterotetramer of two MnmE and two MnmG subunits. Requires K(+) as cofactor.

It localises to the cytoplasm. In terms of biological role, exhibits a very high intrinsic GTPase hydrolysis rate. Involved in the addition of a carboxymethylaminomethyl (cmnm) group at the wobble position (U34) of certain tRNAs, forming tRNA-cmnm(5)s(2)U34. In Desulforamulus reducens (strain ATCC BAA-1160 / DSM 100696 / MI-1) (Desulfotomaculum reducens), this protein is tRNA modification GTPase MnmE.